Reading from the N-terminus, the 492-residue chain is Zinc finger protein 385B (492 aa).

2 consecutive Matrin-type zinc fingers follow at residues 8-44 (KKLL…VKQL) and 143-173 (ISCN…KLKA). The tract at residues 159–206 (EAHYKGSKHAKKLKAQESPKNKQKSAVAQDSGTKTITSTSTNTTTTTT) is disordered. Residues 189–206 (SGTKTITSTSTNTTTTTT) show a composition bias toward low complexity. 2 consecutive Matrin-type zinc fingers follow at residues 303 to 337 (KKLL…LEAR) and 371 to 401 (FHCE…RVAG). A disordered region spans residues 388–420 (QHISSRRHKDRVAGKPTKPKYSPYNKQQRSSSS).

It is found in the nucleus. In terms of biological role, may play a role in p53/TP53-mediated apoptosis. The chain is Zinc finger protein 385B (znf385b) from Danio rerio (Zebrafish).